We begin with the raw amino-acid sequence, 412 residues long: Esterase EstD (412 aa).

Residues 1–20 (MRLTVFLSLFLGVMVFGAFD) form the signal peptide. Serine 243 (nucleophile) is an active-site residue. Catalysis depends on charge relay system residues aspartate 347 and histidine 378.

Belongs to the AB hydrolase superfamily. Esterase 10 family. As to quaternary structure, exists mainly as a monomer and, to some extent as a dimer.

The catalysed reaction is a carboxylic ester + H2O = an alcohol + a carboxylate + H(+). With respect to regulation, is strongly inhibited by phenylmethylsulfonyl fluoride, a serine protease inhibitor, and by mercury chloride. Diethyl pyrocarbonate, a histidine modifier, also inhibits the reaction, albeit less pronounced than phenylmethylsulfonyl fluoride. EDTA and dithiothreitol have no effect on enzyme activity. Exhibits significant esterase activity with a preference for short acyl chain esters (C4-C8) in vitro. Its physiological function is not known. Displays neither proteolytic activity using casein as substrate, nor peptidase activity when assayed with L-leucine p-nitroanilide and L-proline p-nitroanilide. This is Esterase EstD from Thermotoga maritima (strain ATCC 43589 / DSM 3109 / JCM 10099 / NBRC 100826 / MSB8).